The chain runs to 299 residues: Leucine zipper transcription factor-like protein 1 (299 aa).

Residues 96 to 296 (LKLQTDISEL…DLRKRLAKYE (201 aa)) adopt a coiled-coil conformation. The interaction with BSS9 stretch occupies residues 145-299 (GAAELLNKEI…KRLAKYEPED (155 aa)).

It belongs to the LZTFL1 family. As to quaternary structure, self-associates. Interacts with BBS9; the interaction mediates the association of LZTL1 with the BBsome complex and regulates BBSome ciliary trafficking.

It is found in the cytoplasm. In terms of biological role, regulates ciliary localization of the BBSome complex. Together with the BBSome complex, controls SMO ciliary trafficking and contributes to the sonic hedgehog (SHH) pathway regulation. May play a role in neurite outgrowth. May have tumor suppressor function. This chain is Leucine zipper transcription factor-like protein 1 (LZTFL1), found in Bos taurus (Bovine).